The following is a 115-amino-acid chain: Aspartate 1-decarboxylase (115 aa).

Residue serine 25 is the Schiff-base intermediate with substrate; via pyruvic acid of the active site. At serine 25 the chain carries Pyruvic acid (Ser). Substrate is bound at residue threonine 57. The active-site Proton donor is tyrosine 58. Residue 73–75 (GAA) coordinates substrate.

Belongs to the PanD family. Heterooctamer of four alpha and four beta subunits. The cofactor is pyruvate. Post-translationally, is synthesized initially as an inactive proenzyme, which is activated by self-cleavage at a specific serine bond to produce a beta-subunit with a hydroxyl group at its C-terminus and an alpha-subunit with a pyruvoyl group at its N-terminus.

It localises to the cytoplasm. The catalysed reaction is L-aspartate + H(+) = beta-alanine + CO2. It participates in cofactor biosynthesis; (R)-pantothenate biosynthesis; beta-alanine from L-aspartate: step 1/1. In terms of biological role, catalyzes the pyruvoyl-dependent decarboxylation of aspartate to produce beta-alanine. The sequence is that of Aspartate 1-decarboxylase from Kosmotoga olearia (strain ATCC BAA-1733 / DSM 21960 / TBF 19.5.1).